We begin with the raw amino-acid sequence, 923 residues long: MRFSHFLKYNAVPEWQNHYLDYNELKNLIYTLQTDELKQETPTGDLNDDADSQTPGPIADIESNIAAGEPSSSKRRFTHKLKRKLFGSKTPSGSKRGDSDEKAIDGNNINEETIELDELSPQGKTTSFNKNFIRKKFFESRSSSVSSEGKTLFSSYDTFVTNLSDEKLKVDDFYKRMEAKFYERFDHLINDLEKEGIVTRLNETFNPEIQALPPLREIISGTSETHSSNNPFEIHSSNIDSELRNRFDYSEEEMDEDDDVDVFADTTDNTALLNYSQFNIKSQKKSLLKQTIINLYIDLCQLKSFIELNRMGFSKITKKSDKVLHMNTRQELIESEEFFKDTYIFQHETLSSLNSKIAQLIEFYAVLMGQPGNVDSCKQELKSYLHDHIVWERSNTWKDMLGLSSQNNDIITIEDEAEKLMQEKLQIEYFKYPLPKPINLKFTKIENLAVPKLFFGKRAMKIGFIIIVTGVLLGVKTFNDPVEHRCMALVECCAFLWASEAIPLHITGLLVPLLTVLFRVLKDDDGKVMGAAAASTEILGTMWSSTIMILLAGFTLGEALSQYNVAKVLASWLLALAGTKPRNVLLMAMSVVFFLSMWISNVASPVLTYSLLTPLLDPLDYTSPFAKALVMGVALSADIGGMASPISSPQNIISMQYLKPYGIGWGQFFAVALPTGILSMLCSWALMILTFKIGKTKLEKFKPIRTRFTIKQYFIIIVTIATILLWCVESQIESAFGSSGEIAVIPIVLFFGTGLLSTKDFNTFPWSIVVLAMGGIALGKAVSSSGLLVTIARALQKKIQNDGVFAILCIFGILMLVVGTFVSHTVSAIIIIPLVQEVGDKLSDPKAAPILVFGCALLASCGMGLASSGFPNVTAISMTDKKGNRWLTVGAFISRGVPASLLAFVCVITLGYGISSSVLKGST.

The SPX domain maps to 1 to 334 (MRFSHFLKYN…HMNTRQELIE (334 aa)). At 1-461 (MRFSHFLKYN…KLFFGKRAMK (461 aa)) the chain is on the extracellular side. Disordered stretches follow at residues 40–74 (ETPT…SSSK) and 86–107 (FGSK…IDGN). Residues 95 to 104 (KRGDSDEKAI) are compositionally biased toward basic and acidic residues. Lysine 102 is covalently cross-linked (Glycyl lysine isopeptide (Lys-Gly) (interchain with G-Cter in ubiquitin)). Asparagine 162, asparagine 202, and asparagine 274 each carry an N-linked (GlcNAc...) asparagine glycan. Residues 462-482 (IGFIIIVTGVLLGVKTFNDPV) form a helical membrane-spanning segment. Topologically, residues 483–493 (EHRCMALVECC) are cytoplasmic. The chain crosses the membrane as a helical span at residues 494-514 (AFLWASEAIPLHITGLLVPLL). At 515 to 537 (TVLFRVLKDDDGKVMGAAAASTE) the chain is on the extracellular side. The chain crosses the membrane as a helical span at residues 538–558 (ILGTMWSSTIMILLAGFTLGE). Residues 559–583 (ALSQYNVAKVLASWLLALAGTKPRN) lie on the Cytoplasmic side of the membrane. The helical transmembrane segment at 584–604 (VLLMAMSVVFFLSMWISNVAS) threads the bilayer. Over 605 to 627 (PVLTYSLLTPLLDPLDYTSPFAK) the chain is Extracellular. The helical transmembrane segment at 628 to 648 (ALVMGVALSADIGGMASPISS) threads the bilayer. Topologically, residues 649–667 (PQNIISMQYLKPYGIGWGQ) are cytoplasmic. The chain crosses the membrane as a helical span at residues 668–688 (FFAVALPTGILSMLCSWALMI). The Extracellular segment spans residues 689–707 (LTFKIGKTKLEKFKPIRTR). The helical transmembrane segment at 708–728 (FTIKQYFIIIVTIATILLWCV) threads the bilayer. Residues 729–735 (ESQIESA) lie on the Cytoplasmic side of the membrane. Residues 736-756 (FGSSGEIAVIPIVLFFGTGLL) form a helical membrane-spanning segment. Residues 757–767 (STKDFNTFPWS) are Extracellular-facing. Residues 768–788 (IVVLAMGGIALGKAVSSSGLL) form a helical membrane-spanning segment. At 789–802 (VTIARALQKKIQND) the chain is on the cytoplasmic side. Residues 803–823 (GVFAILCIFGILMLVVGTFVS) form a helical membrane-spanning segment. At 824–849 (HTVSAIIIIPLVQEVGDKLSDPKAAP) the chain is on the extracellular side. The helical transmembrane segment at 850 to 870 (ILVFGCALLASCGMGLASSGF) threads the bilayer. Residues 871–898 (PNVTAISMTDKKGNRWLTVGAFISRGVP) lie on the Cytoplasmic side of the membrane. Residues 899-919 (ASLLAFVCVITLGYGISSSVL) traverse the membrane as a helical segment. Residues 920-923 (KGST) lie on the Extracellular side of the membrane.

Belongs to the CitM (TC 2.A.11) transporter family.

Its subcellular location is the membrane. Involved in the uptake of inorganic phosphate. This Saccharomyces cerevisiae (strain ATCC 204508 / S288c) (Baker's yeast) protein is Inorganic phosphate transporter PHO87 (PHO87).